The primary structure comprises 434 residues: MLDIQLFRKDIDAVAQRLATRGFQLDVAAFQALEAERKQLQTQTEELQARRNSLSKQIGMLKGKGEDASAVMAEVGGIGDTLKASAARLDEIQAHLGELMLSIPNLPHESVPVGNDETQNVEVRRVGEPRQFDFAVRDHVDVGEKLGLDFDTAVKVTGSRFSMLRGGMARLHRALVQLMLDTHTQEHGYTEMYVPYIVNAASMRGTGQLPKFEEDLFKVPRKVGSEEGERIENFYLIPTAEVPLTNIVRDAIVAGDKLPLRFVAHTPCFRSEAGSYGKDTRGMIRQHQFDKVELVQVVPADQSFDALEQLTGHAEAILKKLELPFRTIVLCTGDMGFGSTKTYDLEVWIPAQNTYREISSCSNMGDFQARRMQARMRTGQGKPELVHTLNGSGLAVGRTLVAILENYQNADGSVTVPAALQPYMGGTTRLEPEL.

239–241 contacts L-serine; that stretch reads TAE. 270-272 lines the ATP pocket; that stretch reads RSE. Glu293 contacts L-serine. An ATP-binding site is contributed by 357–360; it reads EISS. An L-serine-binding site is contributed by Ser392.

The protein belongs to the class-II aminoacyl-tRNA synthetase family. Type-1 seryl-tRNA synthetase subfamily. As to quaternary structure, homodimer. The tRNA molecule binds across the dimer.

It is found in the cytoplasm. The catalysed reaction is tRNA(Ser) + L-serine + ATP = L-seryl-tRNA(Ser) + AMP + diphosphate + H(+). The enzyme catalyses tRNA(Sec) + L-serine + ATP = L-seryl-tRNA(Sec) + AMP + diphosphate + H(+). The protein operates within aminoacyl-tRNA biosynthesis; selenocysteinyl-tRNA(Sec) biosynthesis; L-seryl-tRNA(Sec) from L-serine and tRNA(Sec): step 1/1. Catalyzes the attachment of serine to tRNA(Ser). Is also able to aminoacylate tRNA(Sec) with serine, to form the misacylated tRNA L-seryl-tRNA(Sec), which will be further converted into selenocysteinyl-tRNA(Sec). The polypeptide is Serine--tRNA ligase (Cupriavidus taiwanensis (strain DSM 17343 / BCRC 17206 / CCUG 44338 / CIP 107171 / LMG 19424 / R1) (Ralstonia taiwanensis (strain LMG 19424))).